A 1131-amino-acid chain; its full sequence is Phytochrome A (1131 aa).

Positions 1 to 23 are disordered; the sequence is MSSSRPAHSSSSSSRTRQSSRAR. The 186-residue stretch at 219–404 folds into the GAF domain; sequence SMEALCNTVV…VFAVHVNKEF (186 aa). Cys-324 contributes to the phytochromobilin binding site. PAS domains are found at residues 620 to 690 and 750 to 834; these read VTSE…LQGR and VEGD…LAGE. Residues 904-1124 enclose the Histidine kinase domain; the sequence is YMRHAINKPL…TFILTAELAA (221 aa).

Belongs to the phytochrome family. In terms of assembly, homodimer. Post-translationally, contains one covalently linked phytochromobilin chromophore.

Regulatory photoreceptor which exists in two forms that are reversibly interconvertible by light: the Pr form that absorbs maximally in the red region of the spectrum and the Pfr form that absorbs maximally in the far-red region. Photoconversion of Pr to Pfr induces an array of morphogenic responses, whereas reconversion of Pfr to Pr cancels the induction of those responses. Pfr controls the expression of a number of nuclear genes including those encoding the small subunit of ribulose-bisphosphate carboxylase, chlorophyll A/B binding protein, protochlorophyllide reductase, rRNA, etc. It also controls the expression of its own gene(s) in a negative feedback fashion. The polypeptide is Phytochrome A (PHYA1) (Zea mays (Maize)).